The following is a 457-amino-acid chain: UDP-N-acetyl-alpha-D-muramoyl-L-alanyl-L-glutamate epimerase (457 aa).

Belongs to the MurL family.

It catalyses the reaction UDP-N-acetyl-alpha-D-muramoyl-L-alanyl-L-glutamate + ATP + H2O = UDP-N-acetyl-alpha-D-muramoyl-L-alanyl-D-glutamate + AMP + diphosphate + H(+). The protein operates within cell wall biogenesis; peptidoglycan biosynthesis. Its function is as follows. Cell wall formation. Catalyzes epimerization of the terminal L-glutamate in UDP-N-acetyl-alpha-D-muramoyl-L-alanyl-L-glutamate. This Salinispora tropica (strain ATCC BAA-916 / DSM 44818 / JCM 13857 / NBRC 105044 / CNB-440) protein is UDP-N-acetyl-alpha-D-muramoyl-L-alanyl-L-glutamate epimerase.